A 949-amino-acid polypeptide reads, in one-letter code: MAM domain-containing glycosylphosphatidylinositol anchor protein 2 (949 aa).

A signal peptide spans 1 to 25; that stretch reads MDLVYGLVWLLTVLLEGISGQGVYA. 2 consecutive Ig-like domains span residues 27-127 and 134-232; these read PTVR…IRVD and PVVT…KMVS. 2 disulfides stabilise this stretch: Cys-62/Cys-110 and Cys-159/Cys-216. Asn-92, Asn-213, and Asn-237 each carry an N-linked (GlcNAc...) asparagine glycan. 4 consecutive Ig-like domains span residues 242–328, 340–436, 442–533, and 540–627; these read PSIK…NIIV, PDPY…VNIS, PNLT…ALVQ, and PAVE…FLVT. 2 disulfide bridges follow: Cys-264–Cys-310 and Cys-359–Cys-417. N-linked (GlcNAc...) asparagine glycans are attached at residues Asn-434, Asn-443, Asn-504, Asn-610, and Asn-703. 2 disulfide bridges follow: Cys-465–Cys-515 and Cys-561–Cys-611. In terms of domain architecture, Fibronectin type-III spans 638 to 738; that stretch reads DTYNPVWQNR…TIRVIKYTGE (101 aa). The region spanning 739–914 is the MAM domain; sequence FHCGFEDGNI…VSIAEGECAK (176 aa). The GPI-anchor amidated aspartate moiety is linked to residue Asp-924. A propeptide spans 925 to 949 (removed in mature form); that stretch reads GAVGILVHIWLFPVIILISILSPRR.

Interacts (through the Ig-like domains) with NLGN2. In terms of tissue distribution, expressed predominantly in neuronal tissue. Expressed in brain.

It localises to the cell membrane. In terms of biological role, may be involved in cell-cell interactions. The protein is MAM domain-containing glycosylphosphatidylinositol anchor protein 2 (Mdga2) of Rattus norvegicus (Rat).